We begin with the raw amino-acid sequence, 317 residues long: Dimethyladenosine transferase (317 aa).

H37, L39, G64, E85, D113, and N128 together coordinate S-adenosyl-L-methionine.

This sequence belongs to the class I-like SAM-binding methyltransferase superfamily. rRNA adenine N(6)-methyltransferase family.

It catalyses the reaction adenosine(1779)/adenosine(1780) in 18S rRNA + 4 S-adenosyl-L-methionine = N(6)-dimethyladenosine(1779)/N(6)-dimethyladenosine(1780) in 18S rRNA + 4 S-adenosyl-L-homocysteine + 4 H(+). Its function is as follows. Specifically dimethylates two adjacent adenosines in the loop of a conserved hairpin near the 3'-end of 18S rRNA in the 40S particle. This is Dimethyladenosine transferase (DIM1) from Candida glabrata (strain ATCC 2001 / BCRC 20586 / JCM 3761 / NBRC 0622 / NRRL Y-65 / CBS 138) (Yeast).